The chain runs to 179 residues: Large ribosomal subunit protein uL5 (179 aa).

This sequence belongs to the universal ribosomal protein uL5 family. As to quaternary structure, part of the 50S ribosomal subunit; part of the 5S rRNA/L5/L18/L25 subcomplex. Contacts the 5S rRNA and the P site tRNA. Forms a bridge to the 30S subunit in the 70S ribosome.

In terms of biological role, this is one of the proteins that bind and probably mediate the attachment of the 5S RNA into the large ribosomal subunit, where it forms part of the central protuberance. In the 70S ribosome it contacts protein S13 of the 30S subunit (bridge B1b), connecting the 2 subunits; this bridge is implicated in subunit movement. Contacts the P site tRNA; the 5S rRNA and some of its associated proteins might help stabilize positioning of ribosome-bound tRNAs. This chain is Large ribosomal subunit protein uL5, found in Burkholderia mallei (strain NCTC 10247).